The primary structure comprises 170 residues: Orotate phosphoribosyltransferase (170 aa).

Residues arginine 86, lysine 87, lysine 90, histidine 92, and glutamate 111 to serine 119 each bind 5-phospho-alpha-D-ribose 1-diphosphate. The orotate site is built by threonine 115 and arginine 143.

This sequence belongs to the purine/pyrimidine phosphoribosyltransferase family. PyrE subfamily. As to quaternary structure, homodimer. Mg(2+) is required as a cofactor.

The enzyme catalyses orotidine 5'-phosphate + diphosphate = orotate + 5-phospho-alpha-D-ribose 1-diphosphate. The protein operates within pyrimidine metabolism; UMP biosynthesis via de novo pathway; UMP from orotate: step 1/2. Catalyzes the transfer of a ribosyl phosphate group from 5-phosphoribose 1-diphosphate to orotate, leading to the formation of orotidine monophosphate (OMP). In Methanoculleus marisnigri (strain ATCC 35101 / DSM 1498 / JR1), this protein is Orotate phosphoribosyltransferase.